Here is a 255-residue protein sequence, read N- to C-terminus: Putative keratin-87 protein (255 aa).

Positions M1 to L255 constitute an IF rod domain. Coiled-coil stretches lie at residues L19–V81 and L147–S227.

This sequence belongs to the intermediate filament family. Heterotetramer of two type I and two type II keratins.

The polypeptide is Putative keratin-87 protein (KRT87P) (Homo sapiens (Human)).